The sequence spans 87 residues: MSVKIRLARFGAKKRPFYRVVVADSRVARDGRFIELLGFYNPMLPKEHPSFLKVKVDRLKYWLSVGAQPTERISWFIKKGLISTEAA.

This sequence belongs to the bacterial ribosomal protein bS16 family.

The protein is Small ribosomal subunit protein bS16 of Ehrlichia ruminantium (strain Welgevonden).